Consider the following 441-residue polypeptide: Dolichyl-diphosphooligosaccharide--protein glycosyltransferase 48 kDa subunit (441 aa).

Residues 1 to 28 (MKMVPRLAVRAWPLCGLLLAALGCVCAS) form the signal peptide. Topologically, residues 29–412 (GPRTLVLLDN…YERFIPSAYP (384 aa)) are lumenal. The chain crosses the membrane as a helical span at residues 413 to 432 (YYASAFSMMAGLFLFSVVFL). At 433–441 (HMKEKEKSD) the chain is on the cytoplasmic side.

This sequence belongs to the DDOST 48 kDa subunit family. In terms of assembly, component of the oligosaccharyltransferase (OST) complex. OST exists in two different complex forms which contain common core subunits RPN1, RPN2, OST48, OST4, DAD1 and TMEM258, either STT3A or STT3B as catalytic subunits, and form-specific accessory subunits. STT3A complex assembly occurs through the formation of 3 subcomplexes. Subcomplex 1 contains RPN1 and TMEM258, subcomplex 2 contains the STT3A-specific subunits STT3A, DC2/OSTC, and KCP2 as well as the core subunit OST4, and subcomplex 3 contains RPN2, DAD1, and OST48. The STT3A complex can form stable complexes with the Sec61 complex or with both the Sec61 and TRAP complexes. Interacts with SMIM22.

It is found in the endoplasmic reticulum membrane. Its pathway is protein modification; protein glycosylation. Functionally, subunit of the oligosaccharyl transferase (OST) complex that catalyzes the initial transfer of a defined glycan (Glc(3)Man(9)GlcNAc(2) in eukaryotes) from the lipid carrier dolichol-pyrophosphate to an asparagine residue within an Asn-X-Ser/Thr consensus motif in nascent polypeptide chains, the first step in protein N-glycosylation. N-glycosylation occurs cotranslationally and the complex associates with the Sec61 complex at the channel-forming translocon complex that mediates protein translocation across the endoplasmic reticulum (ER). All subunits are required for a maximal enzyme activity. Required for the assembly of both SST3A- and SS3B-containing OST complexes. In Rattus norvegicus (Rat), this protein is Dolichyl-diphosphooligosaccharide--protein glycosyltransferase 48 kDa subunit.